We begin with the raw amino-acid sequence, 223 residues long: Large ribosomal subunit protein uL6c (223 aa).

The N-terminal 41 residues, 1 to 41 (MASSLVSSFQPRSAFLGDRNVFKVSSTPFAQVGYSSKTIEC), are a transit peptide targeting the chloroplast.

This sequence belongs to the universal ribosomal protein uL6 family. As to quaternary structure, part of the 50S ribosomal subunit.

The protein localises to the plastid. The protein resides in the chloroplast. In terms of biological role, this protein binds directly to 23S ribosomal RNA and is located at the aminoacyl-tRNA binding site of the peptidyltransferase center. This chain is Large ribosomal subunit protein uL6c (RPL6), found in Arabidopsis thaliana (Mouse-ear cress).